The sequence spans 458 residues: Nuclear transcription factor Y subunit gamma (458 aa).

The segment covering 305 to 315 (QQQFSQFTDGQ) has biased composition (low complexity). Residues 305-379 (QQQFSQFTDG…QQSSTSPPPS (75 aa)) form a disordered region. Positions 339–351 (TGNSTPCTSSLPT) are enriched in polar residues.

It belongs to the NFYC/HAP5 subunit family. In terms of assembly, heterotrimeric transcription factor composed of three components, NF-YA, NF-YB and NF-YC. NF-YB and NF-YC must interact and dimerize for NF-YA association and DNA binding.

It is found in the nucleus. Component of the sequence-specific heterotrimeric transcription factor (NF-Y) which specifically recognizes a 5'-CCAAT-3' box motif found in the promoters of its target genes. NF-Y can function as both an activator and a repressor, depending on its interacting cofactors. The polypeptide is Nuclear transcription factor Y subunit gamma (NFYC) (Homo sapiens (Human)).